We begin with the raw amino-acid sequence, 301 residues long: uncharacterized protein (301 aa).

This is an uncharacterized protein from Methanocaldococcus jannaschii (strain ATCC 43067 / DSM 2661 / JAL-1 / JCM 10045 / NBRC 100440) (Methanococcus jannaschii).